The chain runs to 593 residues: Probable metalloendopeptidase G1-type (593 aa).

Histidine 41 provides a ligand contact to Zn(2+). Glutamate 44 is an active-site residue. Position 45 (histidine 45) interacts with Zn(2+).

Belongs to the peptidase M44 family. The cofactor is Zn(2+).

Functionally, seems to be involved in viral proteins maturation by cleavage at Ala-Gly-|-Xaa motifs. This Homo sapiens (Human) protein is Probable metalloendopeptidase G1-type.